Reading from the N-terminus, the 361-residue chain is Phosphoserine aminotransferase (361 aa).

Arg43 serves as a coordination point for L-glutamate. Residues 77 to 78 (AS), Trp103, Thr153, Asp173, and Gln196 each bind pyridoxal 5'-phosphate. N6-(pyridoxal phosphate)lysine is present on Lys197. 238 to 239 (NT) is a pyridoxal 5'-phosphate binding site.

Belongs to the class-V pyridoxal-phosphate-dependent aminotransferase family. SerC subfamily. Homodimer. Pyridoxal 5'-phosphate serves as cofactor.

It localises to the cytoplasm. The enzyme catalyses O-phospho-L-serine + 2-oxoglutarate = 3-phosphooxypyruvate + L-glutamate. It carries out the reaction 4-(phosphooxy)-L-threonine + 2-oxoglutarate = (R)-3-hydroxy-2-oxo-4-phosphooxybutanoate + L-glutamate. It functions in the pathway amino-acid biosynthesis; L-serine biosynthesis; L-serine from 3-phospho-D-glycerate: step 2/3. Its function is as follows. Catalyzes the reversible conversion of 3-phosphohydroxypyruvate to phosphoserine and of 3-hydroxy-2-oxo-4-phosphonooxybutanoate to phosphohydroxythreonine. This Bacillus anthracis (strain A0248) protein is Phosphoserine aminotransferase.